A 240-amino-acid chain; its full sequence is Uridylate kinase (240 aa).

Residue 12–15 (KLSG) participates in ATP binding. Glycine 54 lines the UMP pocket. ATP-binding residues include glycine 55 and arginine 59. UMP is bound by residues aspartate 74 and 135 to 142 (TGNPFFTT). Residues threonine 162, tyrosine 168, and aspartate 171 each coordinate ATP.

It belongs to the UMP kinase family. Homohexamer.

It is found in the cytoplasm. It carries out the reaction UMP + ATP = UDP + ADP. The protein operates within pyrimidine metabolism; CTP biosynthesis via de novo pathway; UDP from UMP (UMPK route): step 1/1. Inhibited by UTP. Its function is as follows. Catalyzes the reversible phosphorylation of UMP to UDP. This chain is Uridylate kinase, found in Xanthomonas axonopodis pv. citri (strain 306).